Consider the following 373-residue polypeptide: Sorting nexin-21 (373 aa).

The tract at residues 1-107 is disordered; sequence MHRGTQEGAM…RSPPPDGQWG (107 aa). The span at 21–37 shows a compositional bias: low complexity; it reads ALAGDGPGEAAASPEAE. The span at 55 to 65 shows a compositional bias: polar residues; sequence SRLSGTLSFTS. The segment covering 66-81 has biased composition (acidic residues); sequence AEDDEDDEDEDDEEAG. Residues 129–246 enclose the PX domain; the sequence is QRLLFEVTSA…DFFVLPELRR (118 aa). A 1,2-diacyl-sn-glycero-3-phospho-(1D-myo-inositol-3-phosphate) is bound by residues R171, S173, K198, and R212.

The protein belongs to the sorting nexin family. As to quaternary structure, monomer. In terms of tissue distribution, highly expressed in fetus liver, but only weakly expressed in brain, skeleton muscle, smooth muscle, and cardiac muscle, kidney, and adrenal gland.

Its subcellular location is the cytoplasmic vesicle membrane. It is found in the early endosome membrane. Its function is as follows. Binds to membranes enriched in phosphatidylinositol 3-phosphate (PtdIns(P3)) and phosphatidylinositol 4,5-bisphosphate. May be involved in several stages of intracellular trafficking. The sequence is that of Sorting nexin-21 (SNX21) from Homo sapiens (Human).